A 346-amino-acid chain; its full sequence is GTPase Obg (346 aa).

The Obg domain maps to 1–159 (MKFLDSAKIY…RTVLLRLKLI (159 aa)). The OBG-type G domain occupies 160-327 (ADAGLVGLPN…ALRAVLAEID (168 aa)). Residues 166–173 (GLPNAGKS), 191–195 (FTTLN), 212–215 (DIPG), 279–282 (SKVD), and 308–310 (SAA) contribute to the GTP site. Mg(2+) contacts are provided by Ser-173 and Thr-193.

Belongs to the TRAFAC class OBG-HflX-like GTPase superfamily. OBG GTPase family. Monomer. The cofactor is Mg(2+).

Its subcellular location is the cytoplasm. Functionally, an essential GTPase which binds GTP, GDP and possibly (p)ppGpp with moderate affinity, with high nucleotide exchange rates and a fairly low GTP hydrolysis rate. Plays a role in control of the cell cycle, stress response, ribosome biogenesis and in those bacteria that undergo differentiation, in morphogenesis control. The polypeptide is GTPase Obg (Methylocella silvestris (strain DSM 15510 / CIP 108128 / LMG 27833 / NCIMB 13906 / BL2)).